The primary structure comprises 78 residues: Large ribosomal subunit protein bL28 (78 aa).

Belongs to the bacterial ribosomal protein bL28 family.

This chain is Large ribosomal subunit protein bL28, found in Prochlorococcus marinus (strain MIT 9303).